The chain runs to 76 residues: Acyl carrier protein (76 aa).

Positions 1-76 (MSLEEKVKNI…DVIEYIKAHT (76 aa)) constitute a Carrier domain. Ser-36 carries the O-(pantetheine 4'-phosphoryl)serine modification.

The protein belongs to the acyl carrier protein (ACP) family. In terms of processing, 4'-phosphopantetheine is transferred from CoA to a specific serine of apo-ACP by AcpS. This modification is essential for activity because fatty acids are bound in thioester linkage to the sulfhydryl of the prosthetic group.

The protein resides in the cytoplasm. It participates in lipid metabolism; fatty acid biosynthesis. Its function is as follows. Carrier of the growing fatty acid chain in fatty acid biosynthesis. In Desulfatibacillum aliphaticivorans, this protein is Acyl carrier protein.